A 276-amino-acid polypeptide reads, in one-letter code: Putative oxidoreductase SadH (276 aa).

Residue Ser-142 participates in substrate binding. Catalysis depends on Tyr-155, which acts as the Proton acceptor.

It belongs to the short-chain dehydrogenases/reductases (SDR) family.

Required for maintaining the appropriate mycolic acid composition and permeability of the envelope on its exposure to acidic pH. The polypeptide is Putative oxidoreductase SadH (sadH) (Mycobacterium tuberculosis (strain CDC 1551 / Oshkosh)).